We begin with the raw amino-acid sequence, 497 residues long: Serine hydroxymethyltransferase (497 aa).

(6S)-5,6,7,8-tetrahydrofolate is bound by residues Leu-176 and 180–182; that span reads GHL. At Lys-289 the chain carries N6-(pyridoxal phosphate)lysine.

Belongs to the SHMT family. In terms of assembly, homodimer. Requires pyridoxal 5'-phosphate as cofactor.

The protein localises to the cytoplasm. The catalysed reaction is (6R)-5,10-methylene-5,6,7,8-tetrahydrofolate + glycine + H2O = (6S)-5,6,7,8-tetrahydrofolate + L-serine. It participates in one-carbon metabolism; tetrahydrofolate interconversion. The protein operates within amino-acid biosynthesis; glycine biosynthesis; glycine from L-serine: step 1/1. In terms of biological role, catalyzes the reversible interconversion of serine and glycine with tetrahydrofolate (THF) serving as the one-carbon carrier. This reaction serves as the major source of one-carbon groups required for the biosynthesis of purines, thymidylate, methionine, and other important biomolecules. Also exhibits THF-independent aldolase activity toward beta-hydroxyamino acids, producing glycine and aldehydes, via a retro-aldol mechanism. This Chlamydia felis (strain Fe/C-56) (Chlamydophila felis) protein is Serine hydroxymethyltransferase.